Reading from the N-terminus, the 445-residue chain is Probable glycine dehydrogenase (decarboxylating) subunit 1 (445 aa).

It belongs to the GcvP family. N-terminal subunit subfamily. In terms of assembly, the glycine cleavage system is composed of four proteins: P, T, L and H. In this organism, the P 'protein' is a heterodimer of two subunits.

It catalyses the reaction N(6)-[(R)-lipoyl]-L-lysyl-[glycine-cleavage complex H protein] + glycine + H(+) = N(6)-[(R)-S(8)-aminomethyldihydrolipoyl]-L-lysyl-[glycine-cleavage complex H protein] + CO2. Its function is as follows. The glycine cleavage system catalyzes the degradation of glycine. The P protein binds the alpha-amino group of glycine through its pyridoxal phosphate cofactor; CO(2) is released and the remaining methylamine moiety is then transferred to the lipoamide cofactor of the H protein. This chain is Probable glycine dehydrogenase (decarboxylating) subunit 1, found in Citrifermentans bemidjiense (strain ATCC BAA-1014 / DSM 16622 / JCM 12645 / Bem) (Geobacter bemidjiensis).